The sequence spans 580 residues: Arginine--tRNA ligase (580 aa).

The 'HIGH' region motif lies at 131–141 (ANPTGPLHVGH).

Belongs to the class-I aminoacyl-tRNA synthetase family. In terms of assembly, monomer.

Its subcellular location is the cytoplasm. The catalysed reaction is tRNA(Arg) + L-arginine + ATP = L-arginyl-tRNA(Arg) + AMP + diphosphate. The polypeptide is Arginine--tRNA ligase (Roseobacter denitrificans (strain ATCC 33942 / OCh 114) (Erythrobacter sp. (strain OCh 114))).